The following is a 278-amino-acid chain: Shikimate dehydrogenase (NADP(+)) (278 aa).

Shikimate is bound by residues 19-21 and Thr-66; that span reads SRS. The active-site Proton acceptor is Lys-70. Residues Asn-91 and Asp-106 each coordinate shikimate. Residues 129-133 and Phe-221 contribute to the NADP(+) site; that span reads GAGGA. Tyr-223 lines the shikimate pocket. NADP(+) is bound at residue Gly-242.

The protein belongs to the shikimate dehydrogenase family. In terms of assembly, homodimer.

It catalyses the reaction shikimate + NADP(+) = 3-dehydroshikimate + NADPH + H(+). The protein operates within metabolic intermediate biosynthesis; chorismate biosynthesis; chorismate from D-erythrose 4-phosphate and phosphoenolpyruvate: step 4/7. Its function is as follows. Involved in the biosynthesis of the chorismate, which leads to the biosynthesis of aromatic amino acids. Catalyzes the reversible NADPH linked reduction of 3-dehydroshikimate (DHSA) to yield shikimate (SA). In Anaeromyxobacter dehalogenans (strain 2CP-C), this protein is Shikimate dehydrogenase (NADP(+)).